The primary structure comprises 759 residues: Phosphoribosylformylglycinamidine synthase subunit PurL (759 aa).

His-46 is a catalytic residue. ATP contacts are provided by Tyr-49 and Lys-88. Residue Glu-90 participates in Mg(2+) binding. Substrate is bound by residues 91 to 94 (SHNH) and Arg-113. The active-site Proton acceptor is the His-92. Asp-114 lines the Mg(2+) pocket. Gln-237 contacts substrate. Asp-265 lines the Mg(2+) pocket. A substrate-binding site is contributed by 309–311 (ESQ). The ATP site is built by Asp-498 and Gly-535. Residue Asn-536 participates in Mg(2+) binding. Ser-538 is a binding site for substrate.

The protein belongs to the FGAMS family. As to quaternary structure, monomer. Part of the FGAM synthase complex composed of 1 PurL, 1 PurQ and 2 PurS subunits.

The protein resides in the cytoplasm. It carries out the reaction N(2)-formyl-N(1)-(5-phospho-beta-D-ribosyl)glycinamide + L-glutamine + ATP + H2O = 2-formamido-N(1)-(5-O-phospho-beta-D-ribosyl)acetamidine + L-glutamate + ADP + phosphate + H(+). The protein operates within purine metabolism; IMP biosynthesis via de novo pathway; 5-amino-1-(5-phospho-D-ribosyl)imidazole from N(2)-formyl-N(1)-(5-phospho-D-ribosyl)glycinamide: step 1/2. Functionally, part of the phosphoribosylformylglycinamidine synthase complex involved in the purines biosynthetic pathway. Catalyzes the ATP-dependent conversion of formylglycinamide ribonucleotide (FGAR) and glutamine to yield formylglycinamidine ribonucleotide (FGAM) and glutamate. The FGAM synthase complex is composed of three subunits. PurQ produces an ammonia molecule by converting glutamine to glutamate. PurL transfers the ammonia molecule to FGAR to form FGAM in an ATP-dependent manner. PurS interacts with PurQ and PurL and is thought to assist in the transfer of the ammonia molecule from PurQ to PurL. This is Phosphoribosylformylglycinamidine synthase subunit PurL from Anaeromyxobacter dehalogenans (strain 2CP-1 / ATCC BAA-258).